We begin with the raw amino-acid sequence, 138 residues long: Nucleoside diphosphate kinase (138 aa).

The ATP site is built by K12, Y60, R88, T94, R105, and N115. H118 (pros-phosphohistidine intermediate) is an active-site residue.

It belongs to the NDK family. Homotetramer. Mg(2+) serves as cofactor.

The protein localises to the cytoplasm. It carries out the reaction a 2'-deoxyribonucleoside 5'-diphosphate + ATP = a 2'-deoxyribonucleoside 5'-triphosphate + ADP. The catalysed reaction is a ribonucleoside 5'-diphosphate + ATP = a ribonucleoside 5'-triphosphate + ADP. In terms of biological role, major role in the synthesis of nucleoside triphosphates other than ATP. The ATP gamma phosphate is transferred to the NDP beta phosphate via a ping-pong mechanism, using a phosphorylated active-site intermediate. The polypeptide is Nucleoside diphosphate kinase (Cutibacterium acnes (strain DSM 16379 / KPA171202) (Propionibacterium acnes)).